We begin with the raw amino-acid sequence, 578 residues long: Adhesion G protein-coupled receptor A1 (578 aa).

Residues 1–22 lie on the Extracellular side of the membrane; that stretch reads MTQWDLKTVLSLPQYPGEFLHP. The helical transmembrane segment at 23 to 43 threads the bilayer; sequence VVYACTAVMLLCLLASVITYI. Residues 44–56 are Cytoplasmic-facing; it reads LHQSAIRISRKGR. The helical transmembrane segment at 57-77 threads the bilayer; that stretch reads HALLNFCFHAALTFTVFAGGI. The Extracellular segment spans residues 78–87; sequence NRTQHPILCQ. The chain crosses the membrane as a helical span at residues 88–108; that stretch reads AVGIALHYSTLSTMLWIGVTA. Over 109–137 the chain is Cytoplasmic; the sequence is RNIYKQVTKKALPCPGADQPPYPKQPLLR. A helical transmembrane segment spans residues 138–158; the sequence is FYLISGGVPFIICGVTAATNI. Topologically, residues 159 to 178 are extracellular; that stretch reads RNYGTEDEDVAYCWMAWEPS. Residues 179 to 199 form a helical membrane-spanning segment; it reads LGAFYGPAAFIALVTCVYFLC. The Cytoplasmic segment spans residues 200-262; sequence TYVQLRRHPE…NEHSFKAQLR (63 aa). Residues 216 to 236 form a disordered region; that stretch reads ERTEEQQRLAVPESGHRHGVR. Residues 263–283 form a helical membrane-spanning segment; sequence AAAFTLFLFTATWTFGALAVS. Residues 284–289 are Extracellular-facing; it reads QGHFLD. The chain crosses the membrane as a helical span at residues 290 to 310; it reads MIFSCLYGAFCVTLGLFVLIH. Disordered regions lie at residues 463–486 and 537–578; these read PSSL…EGPM and SLPF…ETTV. The span at 469–481 shows a compositional bias: low complexity; the sequence is SPHSSRSESPTSS. Over residues 537–548 the composition is skewed to polar residues; it reads SLPFGGPSQNGL.

Belongs to the G-protein coupled receptor 2 family. Adhesion G-protein coupled receptor (ADGR) subfamily. In terms of tissue distribution, predominantly expressed in CNS.

The protein resides in the membrane. The protein is Adhesion G protein-coupled receptor A1 of Mus musculus (Mouse).